The primary structure comprises 90 residues: DNA-directed RNA polymerase subunit Rpo11 (90 aa).

The protein belongs to the archaeal Rpo11/eukaryotic RPB11/RPC19 RNA polymerase subunit family. Part of the RNA polymerase complex.

The protein localises to the cytoplasm. It carries out the reaction RNA(n) + a ribonucleoside 5'-triphosphate = RNA(n+1) + diphosphate. Functionally, DNA-dependent RNA polymerase (RNAP) catalyzes the transcription of DNA into RNA using the four ribonucleoside triphosphates as substrates. This Metallosphaera sedula (strain ATCC 51363 / DSM 5348 / JCM 9185 / NBRC 15509 / TH2) protein is DNA-directed RNA polymerase subunit Rpo11.